A 668-amino-acid chain; its full sequence is tRNA 5-methylaminomethyl-2-thiouridine biosynthesis bifunctional protein MnmC (668 aa).

Residues 1-245 (MKHYSIQPAN…KREMLCGVME (245 aa)) are tRNA (mnm(5)s(2)U34)-methyltransferase. The FAD-dependent cmnm(5)s(2)U34 oxidoreductase stretch occupies residues 270–668 (IGGGIASALL…LLKGKAVKAG (399 aa)).

This sequence in the N-terminal section; belongs to the methyltransferase superfamily. tRNA (mnm(5)s(2)U34)-methyltransferase family. The protein in the C-terminal section; belongs to the DAO family. The cofactor is FAD.

Its subcellular location is the cytoplasm. It catalyses the reaction 5-aminomethyl-2-thiouridine(34) in tRNA + S-adenosyl-L-methionine = 5-methylaminomethyl-2-thiouridine(34) in tRNA + S-adenosyl-L-homocysteine + H(+). In terms of biological role, catalyzes the last two steps in the biosynthesis of 5-methylaminomethyl-2-thiouridine (mnm(5)s(2)U) at the wobble position (U34) in tRNA. Catalyzes the FAD-dependent demodification of cmnm(5)s(2)U34 to nm(5)s(2)U34, followed by the transfer of a methyl group from S-adenosyl-L-methionine to nm(5)s(2)U34, to form mnm(5)s(2)U34. The sequence is that of tRNA 5-methylaminomethyl-2-thiouridine biosynthesis bifunctional protein MnmC from Escherichia coli O9:H4 (strain HS).